The following is a 361-amino-acid chain: DNA replication and repair protein RecF (361 aa).

Position 30–37 (30–37 (GANGSGKT)) interacts with ATP.

It belongs to the RecF family.

Its subcellular location is the cytoplasm. The RecF protein is involved in DNA metabolism; it is required for DNA replication and normal SOS inducibility. RecF binds preferentially to single-stranded, linear DNA. It also seems to bind ATP. In Pectobacterium atrosepticum (strain SCRI 1043 / ATCC BAA-672) (Erwinia carotovora subsp. atroseptica), this protein is DNA replication and repair protein RecF.